Here is a 137-residue protein sequence, read N- to C-terminus: Gonadotropin subunit beta-1 (137 aa).

An N-terminal signal peptide occupies residues 1-24 (MYCTHLRMLQLVVMATLWVTPVRA). Cystine bridges form between Cys32–Cys78, Cys46–Cys93, Cys55–Cys108, Cys59–Cys110, and Cys113–Cys120. An N-linked (GlcNAc...) asparagine glycan is attached at Asn36.

It belongs to the glycoprotein hormones subunit beta family. As to quaternary structure, heterodimer of an alpha and a beta chain.

It localises to the secreted. Functionally, involved in gametogenesis and steroidogenesis. The sequence is that of Gonadotropin subunit beta-1 (cgba) from Coregonus autumnalis (Arctic cisco).